A 253-amino-acid chain; its full sequence is MSYLTKIIGTKIEEVSGMQPIDVPVTKPISLLHVMSEGFHIISEIKRSSPSKGMIRETVDVAKRARQYEKAGATMISVLTDTTYFNGSFDDLRQVADVVTIPVLCKDFIIDERQLDYAKHYGASVALLIVAALHPTRLHELTRYARSIGLDVLVEVHDEAELRIALELDDVLIGINNRDLKTFEVSLETSIDLMKRYPEVTFVSESGVSTVEAAARLQEAGASAILVGEALMREEDPIRLLEELKTCSLKSVD.

It belongs to the TrpC family.

It catalyses the reaction 1-(2-carboxyphenylamino)-1-deoxy-D-ribulose 5-phosphate + H(+) = (1S,2R)-1-C-(indol-3-yl)glycerol 3-phosphate + CO2 + H2O. The protein operates within amino-acid biosynthesis; L-tryptophan biosynthesis; L-tryptophan from chorismate: step 4/5. This chain is Indole-3-glycerol phosphate synthase, found in Exiguobacterium sp. (strain ATCC BAA-1283 / AT1b).